Reading from the N-terminus, the 275-residue chain is Large ribosomal subunit protein uL2 (275 aa).

A disordered region spans residues 223–275 (VAMNPVDHPHGGGEGRTSGGRHPVSPWGQPTKGYKTRSNKRTDKYIVRRRNKK).

It belongs to the universal ribosomal protein uL2 family. In terms of assembly, part of the 50S ribosomal subunit. Forms a bridge to the 30S subunit in the 70S ribosome.

Its function is as follows. One of the primary rRNA binding proteins. Required for association of the 30S and 50S subunits to form the 70S ribosome, for tRNA binding and peptide bond formation. It has been suggested to have peptidyltransferase activity; this is somewhat controversial. Makes several contacts with the 16S rRNA in the 70S ribosome. The polypeptide is Large ribosomal subunit protein uL2 (Shewanella piezotolerans (strain WP3 / JCM 13877)).